A 125-amino-acid polypeptide reads, in one-letter code: Putative RNA polymerase sigma-G factor (125 aa).

It belongs to the sigma-70 factor family.

Its function is as follows. Sigma factors are initiation factors that promote the attachment of RNA polymerase to specific initiation sites and are then released. This chain is Putative RNA polymerase sigma-G factor, found in Bacillus thuringiensis subsp. kurstaki.